The chain runs to 752 residues: Ribosomal RNA large subunit methyltransferase K/L (752 aa).

A THUMP domain is found at 53-164 (QMYKICLWTR…RDELHISIDL (112 aa)).

The protein belongs to the methyltransferase superfamily. RlmKL family.

Its subcellular location is the cytoplasm. It catalyses the reaction guanosine(2445) in 23S rRNA + S-adenosyl-L-methionine = N(2)-methylguanosine(2445) in 23S rRNA + S-adenosyl-L-homocysteine + H(+). The catalysed reaction is guanosine(2069) in 23S rRNA + S-adenosyl-L-methionine = N(2)-methylguanosine(2069) in 23S rRNA + S-adenosyl-L-homocysteine + H(+). Functionally, specifically methylates the guanine in position 2445 (m2G2445) and the guanine in position 2069 (m7G2069) of 23S rRNA. In Saccharophagus degradans (strain 2-40 / ATCC 43961 / DSM 17024), this protein is Ribosomal RNA large subunit methyltransferase K/L.